The sequence spans 736 residues: Copper-exporting P-type ATPase (736 aa).

Residues 1–17 are compositionally biased toward basic residues; the sequence is MKHDHHQGHTHSGKGHA. Residues 1-32 form a disordered region; sequence MKHDHHQGHTHSGKGHACHHEHNSPKTQQASS. 6 consecutive transmembrane segments (helical) span residues 85–105, 114–134, 149–169, 183–203, 341–361, and 369–389; these read FWIALMLTIPVVILEMGGHGL, SSWIQLLLATPVVLWGGWPFF, FTLIAMGIGVAWIYSMVAVLW, VVAVYFEAAAVITTLVLLGQV, GWFVPAVILVAVLSFIVWALL, and YGLIAAVSVLIIACPCALGLA. Asp-426 functions as the 4-aspartylphosphate intermediate in the catalytic mechanism. Mg(2+) contacts are provided by Asp-426, Thr-428, and Asp-624. Transmembrane regions (helical) follow at residues 682 to 702 and 706 to 726; these read LFFAFIYNVLGVPLAAGVLYP and LLLSPMIAAAAMALSSVSVII.

The protein belongs to the cation transport ATPase (P-type) (TC 3.A.3) family. Type IB subfamily. The cofactor is Mg(2+).

It is found in the cell inner membrane. The enzyme catalyses Cu(+)(in) + ATP + H2O = Cu(+)(out) + ADP + phosphate + H(+). Activated by phospholipids, Mg(2+) and Cu(+). Its function is as follows. Couples the hydrolysis of ATP with the export of copper. The chain is Copper-exporting P-type ATPase from Legionella pneumophila subsp. pneumophila (strain Philadelphia 1 / ATCC 33152 / DSM 7513).